The following is a 2327-amino-acid chain: Kielin/chordin-like protein (2327 aa).

The signal sequence occupies residues 1–19 (MNTLLWTILLPLLFSFCVC). The disordered stretch occupies residues 250-294 (LPLPYSLSGERQMEDEEIQREPRAPDLSDTDHYQQQQSEVPAQLL). The span at 268-281 (QREPRAPDLSDTDH) shows a compositional bias: basic and acidic residues. Residues 291–332 (AQLLAKDDRLQRLEEAVKGLTNMIDMIKSQNADLQARVIALE) are a coiled coil. VWFC domains lie at 339 to 400 (STCV…SVGP), 401 to 438 (CMSC…PLCA), 439 to 493 (TGCS…AKCQ), 494 to 553 (QGCE…PSCP), 554 to 610 (VCEL…LDCS), 611 to 669 (ACEM…SQCQ), 670 to 728 (SCMD…PMCD), 729 to 786 (GCLY…PRCE), 787 to 847 (GCEY…PSCD), 848 to 907 (VCDF…PVCK), 908 to 966 (VCVQ…PVCD), 967 to 1025 (SCSY…AKCP), 1026 to 1083 (DCRY…NNCN), 1084 to 1142 (GCNY…PQCP), 1146 to 1203 (ADCP…RSCD), 1204 to 1260 (GCLM…KECQ), 1261 to 1319 (DCQY…PVCD), 1321 to 1377 (CSYN…CPIC), 1378 to 1439 (QGCH…DGCN), 1440 to 1495 (YSGR…PRCT), 1496 to 1555 (GICK…PVCD), 1556 to 1614 (RCFY…RECP), 1615 to 1673 (VCRY…PRCR), 1674 to 1731 (GCVY…PVCA), 1732 to 1799 (DCIS…SSCA), 1800 to 1860 (QALS…PVCN), 1861 to 1924 (ECVV…HECQ), and 1928 to 1988 (VSCW…PHCI). The 177-residue stretch at 1992-2168 (ATCIAFGDPH…SSNDSSSSCW (177 aa)) folds into the VWFD domain. Intrachain disulfides connect C1994–C2126 and C2016–C2167. The TIL domain occupies 2259–2319 (CPHDRGYVFD…ESHCIPPESC (61 aa)).

The protein resides in the secreted. May be a signaling molecule that mediates inductive activities of the embryonic midline. Able to dorsalize mesoderm. The polypeptide is Kielin/chordin-like protein (kcp) (Xenopus laevis (African clawed frog)).